Consider the following 207-residue polypeptide: Alpha-1-acid glycoprotein 1 (207 aa).

The N-terminal stretch at 1-18 (MALHTVLIILSLLPMLEA) is a signal peptide. Gln-19 carries the post-translational modification Pyrrolidone carboxylic acid. N-linked (GlcNAc...) asparagine glycans are attached at residues Asn-25, Asn-34, Asn-76, Asn-94, and Asn-104. Cys-91 and Cys-184 are oxidised to a cystine.

This sequence belongs to the calycin superfamily. Lipocalin family.

The protein localises to the secreted. Functionally, functions as a transport protein in the blood stream. Binds various ligands in the interior of its beta-barrel domain. Appears to function in modulating the activity of the immune system during the acute-phase reaction. The chain is Alpha-1-acid glycoprotein 1 (Orm1) from Mus musculus (Mouse).